Here is a 335-residue protein sequence, read N- to C-terminus: Delta(7)-sterol 5(6)-desaturase erg3B (335 aa).

3 consecutive transmembrane segments (helical) span residues 74–94, 113–133, and 152–172; these read IWAF…ALVF, IGQA…LFLA, and LYTY…IYWI. A Fatty acid hydroxylase domain is found at 160-284; sequence LFIAFTDFAI…FITFWDRIGG (125 aa). Residues 173-177 carry the Histidine box-1 motif; the sequence is HRGLH. The Histidine box-2 signature appears at 186 to 190; the sequence is HKPHH. A helical transmembrane segment spans residues 219–239; sequence PFLFPLQKAAYLGLFVFVTIW. Residue Asn256 is glycosylated (N-linked (GlcNAc...) asparagine). The Histidine box-3 motif lies at 261–265; it reads HTIHH.

The protein belongs to the sterol desaturase family. Fe cation serves as cofactor.

It localises to the endoplasmic reticulum membrane. Its pathway is steroid metabolism; ergosterol biosynthesis. Delta(7)-sterol 5(6)-desaturase; part of the third module of ergosterol biosynthesis pathway that includes the late steps of the pathway. Erg3B catalyzes the introduction of a C-5 double bond in the B ring to produce 5-dehydroepisterol. The third module or late pathway involves the ergosterol synthesis itself through consecutive reactions that mainly occur in the endoplasmic reticulum (ER) membrane. Firstly, the squalene synthase erg9 catalyzes the condensation of 2 farnesyl pyrophosphate moieties to form squalene, which is the precursor of all steroids. Squalene synthase is crucial for balancing the incorporation of farnesyl diphosphate (FPP) into sterol and nonsterol isoprene synthesis. Secondly, squalene is converted into lanosterol by the consecutive action of the squalene epoxidase erg1 and the lanosterol synthase erg7. Then, the delta(24)-sterol C-methyltransferase erg6 methylates lanosterol at C-24 to produce eburicol. Eburicol is the substrate of the sterol 14-alpha demethylase encoded by cyp51A and cyp51B, to yield 4,4,24-trimethyl ergosta-8,14,24(28)-trienol. The C-14 reductase erg24 then reduces the C14=C15 double bond which leads to 4,4-dimethylfecosterol. A sequence of further demethylations at C-4, involving the C-4 demethylation complex containing the C-4 methylsterol oxidases erg25A or erg25B, the sterol-4-alpha-carboxylate 3-dehydrogenase erg26 and the 3-keto-steroid reductase erg27, leads to the production of fecosterol via 4-methylfecosterol. The C-8 sterol isomerase erg2 then catalyzes the reaction which results in unsaturation at C-7 in the B ring of sterols and thus converts fecosterol to episterol. The sterol-C5-desaturase erg3B then catalyzes the introduction of a C-5 double bond in the B ring to produce 5-dehydroepisterol. The 2 other sterol-C5-desaturases, erg3A and erg3C, seem to be less important in ergosterol biosynthesis. The C-22 sterol desaturase erg5 further converts 5-dehydroepisterol into ergosta-5,7,22,24(28)-tetraen-3beta-ol by forming the C-22(23) double bond in the sterol side chain. Finally, ergosta-5,7,22,24(28)-tetraen-3beta-ol is substrate of the C-24(28) sterol reductases erg4A and erg4B to produce ergosterol. Possible alternative sterol biosynthetic pathways might exist from fecosterol to ergosterol, depending on the activities of the erg3 isoforms. This chain is Delta(7)-sterol 5(6)-desaturase erg3B, found in Aspergillus fumigatus (strain ATCC MYA-4609 / CBS 101355 / FGSC A1100 / Af293) (Neosartorya fumigata).